We begin with the raw amino-acid sequence, 328 residues long: Arabinose 5-phosphate isomerase KdsD (328 aa).

The region spanning 42–184 is the SIS domain; sequence CEKMFWCKGK…AVALLKARGF (143 aa). Substrate is bound by residues 75–76, H82, H88, 114–123, 148–150, T222, and D275; these read GT, ALIPVLKRLH, and KVA. A Zn(2+)-binding site is contributed by H82. One can recognise a CBS 1 domain in the interval 210 to 268; it reads MHTGDEIPHVKKTASLRDALLEVTRKNLGMTVICDDNMMIEGIFTDGDLRRVFDMGVDV. The CBS 2 domain occupies 277 to 328; it reads MTPGGIRVRPGILAVEALNLMQSRHITSVMVADGDHLLGVLHMHDLLRAGVV.

The protein belongs to the SIS family. GutQ/KpsF subfamily. In terms of assembly, homotetramer.

It catalyses the reaction D-arabinose 5-phosphate = D-ribulose 5-phosphate. It participates in carbohydrate biosynthesis; 3-deoxy-D-manno-octulosonate biosynthesis; 3-deoxy-D-manno-octulosonate from D-ribulose 5-phosphate: step 1/3. The protein operates within bacterial outer membrane biogenesis; lipopolysaccharide biosynthesis. Functionally, involved in the biosynthesis of 3-deoxy-D-manno-octulosonate (KDO), a unique 8-carbon sugar component of lipopolysaccharides (LPSs). Catalyzes the reversible aldol-ketol isomerization between D-ribulose 5-phosphate (Ru5P) and D-arabinose 5-phosphate (A5P). The polypeptide is Arabinose 5-phosphate isomerase KdsD (kdsD) (Escherichia coli O157:H7).